A 479-amino-acid chain; its full sequence is mRNA export factor ICP27 homolog (479 aa).

A compositionally biased stretch (low complexity) spans 1–15; it reads MVPSQRLSRTSSISS. 2 disordered regions span residues 1-78 and 92-210; these read MVPS…SSVV and KWDL…NKPW. The segment covering 35 to 44 has biased composition (acidic residues); the sequence is TDCDMDPMEG. Basic and acidic residues predominate over residues 132–142; sequence EVHGCTDESYG. Positions 354, 445, 449, and 454 each coordinate Zn(2+). The CHC2-type zinc finger occupies 354–454; sequence CFLPNTRDYN…HTRDCRSASC (101 aa).

Belongs to the HHV-1 ICP27 protein family. As to quaternary structure, interacts with host XPO1 and with the XPO1 export pathway components small GTPase RAN and nucleoporin NUP214. Interacts with host SPEN, OTT1 and OTT3. Interacts with host SRSF1, SRSF3, SRSF7 and SRPK1. Interacts with host DHX9; this interaction may have an inhibitory effect on virion production. Interacts (via N-terminus) with host NXF1; this interaction plays a role in mRNA export. In terms of processing, phosphorylated by cellular protein kinase CK2.

Its subcellular location is the host nucleus. It is found in the host cytoplasm. Functionally, promotes the nuclear export of a subset of early and late viral mRNAs by interacting with mRNAs and cellular export proteins. Additionally may prevent the establishment of cellular antiviral state, by acting as an alternative splicing factor for cellular RNAs such as STAT1, resulting in a STAT1 mRNA incapable of producing the STAT1alpha isoform. This Homo sapiens (Human) protein is mRNA export factor ICP27 homolog.